The sequence spans 400 residues: Acetate kinase (400 aa).

Asn-10 contacts Mg(2+). Residue Lys-17 coordinates ATP. Arg-91 provides a ligand contact to substrate. Residue Asp-150 is the Proton donor/acceptor of the active site. ATP is bound by residues 210 to 214 (HLGSG), 285 to 287 (DCR), and 333 to 337 (GIGEN). Glu-387 contributes to the Mg(2+) binding site.

The protein belongs to the acetokinase family. In terms of assembly, homodimer. Requires Mg(2+) as cofactor. Mn(2+) is required as a cofactor.

It localises to the cytoplasm. The enzyme catalyses acetate + ATP = acetyl phosphate + ADP. The protein operates within metabolic intermediate biosynthesis; acetyl-CoA biosynthesis; acetyl-CoA from acetate: step 1/2. Its function is as follows. Catalyzes the formation of acetyl phosphate from acetate and ATP. Can also catalyze the reverse reaction. This Baumannia cicadellinicola subsp. Homalodisca coagulata protein is Acetate kinase.